Reading from the N-terminus, the 145-residue chain is Antiholin-like protein LrgA (145 aa).

The next 4 membrane-spanning stretches (helical) occupy residues 10–30 (PAHF…SKII), 33–53 (FMPI…VLLC), 72–92 (NIGL…GVIS), and 96–116 (FLII…TGYV).

The protein belongs to the CidA/LrgA family. LrgA subfamily.

The protein localises to the cell membrane. Its function is as follows. Inhibits the expression or activity of extracellular murein hydrolases by interacting, possibly with LrgB, with the holin-like proteins CidA and/or CidB. The LrgAB and CidAB proteins may affect the proton motive force of the membrane. May be involved in programmed cell death (PCD), possibly triggering PCD in response to antibiotics and environmental stresses. In Staphylococcus aureus (strain Mu3 / ATCC 700698), this protein is Antiholin-like protein LrgA.